The primary structure comprises 471 residues: 8-amino-7-oxononanoate synthase (471 aa).

Substrate is bound at residue arginine 40. A pyridoxal 5'-phosphate-binding site is contributed by 131–132; the sequence is GY. Histidine 156 provides a ligand contact to substrate. Residues serine 202, histidine 230, and threonine 258 each coordinate pyridoxal 5'-phosphate. N6-(pyridoxal phosphate)lysine is present on lysine 261. Threonine 377 provides a ligand contact to substrate. The segment at 409–471 is disordered; the sequence is SEGQTRREAE…LGAARRETAA (63 aa).

Belongs to the class-II pyridoxal-phosphate-dependent aminotransferase family. BioF subfamily. In terms of assembly, homodimer. Requires pyridoxal 5'-phosphate as cofactor.

The catalysed reaction is 6-carboxyhexanoyl-[ACP] + L-alanine + H(+) = (8S)-8-amino-7-oxononanoate + holo-[ACP] + CO2. The protein operates within cofactor biosynthesis; biotin biosynthesis. Its function is as follows. Catalyzes the decarboxylative condensation of pimeloyl-[acyl-carrier protein] and L-alanine to produce 8-amino-7-oxononanoate (AON), [acyl-carrier protein], and carbon dioxide. The protein is 8-amino-7-oxononanoate synthase of Burkholderia ambifaria (strain ATCC BAA-244 / DSM 16087 / CCUG 44356 / LMG 19182 / AMMD) (Burkholderia cepacia (strain AMMD)).